The sequence spans 183 residues: Translocon-associated protein subunit beta (183 aa).

An N-terminal signal peptide occupies residues 1 to 17 (MRLLAVVVLALLAVSQA). Topologically, residues 18–146 (EEGARLLASK…REFDRRFSPH (129 aa)) are lumenal. A glycan (N-linked (GlcNAc...) (high mannose) asparagine) is linked at Asn-88. Asn-104 is a glycosylation site (N-linked (GlcNAc...) asparagine). The helical transmembrane segment at 147–167 (FLDWAAFGVMTLPSIGIPLLL) threads the bilayer. Residues 168–183 (WYSSKRKYDTPKPKKN) lie on the Cytoplasmic side of the membrane.

It belongs to the TRAP-beta family. In terms of assembly, heterotetramer of TRAP-alpha, TRAP-beta, TRAP-delta and TRAP-gamma. Interacts with STING1.

Its subcellular location is the endoplasmic reticulum membrane. Its function is as follows. TRAP proteins are part of a complex whose function is to bind calcium to the ER membrane and thereby regulate the retention of ER resident proteins. The protein is Translocon-associated protein subunit beta (Ssr2) of Mus musculus (Mouse).